Here is an 89-residue protein sequence, read N- to C-terminus: Exodeoxyribonuclease 7 small subunit (89 aa).

The segment at 1 to 23 (MRPWRCVSMAKAPAAPSSTQPDP) is disordered.

Belongs to the XseB family. Heterooligomer composed of large and small subunits.

Its subcellular location is the cytoplasm. It carries out the reaction Exonucleolytic cleavage in either 5'- to 3'- or 3'- to 5'-direction to yield nucleoside 5'-phosphates.. Functionally, bidirectionally degrades single-stranded DNA into large acid-insoluble oligonucleotides, which are then degraded further into small acid-soluble oligonucleotides. The chain is Exodeoxyribonuclease 7 small subunit from Acidovorax sp. (strain JS42).